Here is a 650-residue protein sequence, read N- to C-terminus: Fructose-1,6-bisphosphatase class 3 (650 aa).

This sequence belongs to the FBPase class 3 family. Mn(2+) serves as cofactor.

The enzyme catalyses beta-D-fructose 1,6-bisphosphate + H2O = beta-D-fructose 6-phosphate + phosphate. Its pathway is carbohydrate biosynthesis; gluconeogenesis. This chain is Fructose-1,6-bisphosphatase class 3, found in Finegoldia magna (strain ATCC 29328 / DSM 20472 / WAL 2508) (Peptostreptococcus magnus).